A 152-amino-acid polypeptide reads, in one-letter code: Ribonuclease HI (152 aa).

The RNase H type-1 domain maps to 1 to 142 (MDSKVVIYTD…ADKLAVQGRE (142 aa)). Mg(2+) contacts are provided by Asp10, Glu48, Asp70, and Asp134.

This sequence belongs to the RNase H family. As to quaternary structure, monomer. The cofactor is Mg(2+).

Its subcellular location is the cytoplasm. The catalysed reaction is Endonucleolytic cleavage to 5'-phosphomonoester.. In terms of biological role, endonuclease that specifically degrades the RNA of RNA-DNA hybrids. This Rickettsia prowazekii (strain Madrid E) protein is Ribonuclease HI (rnhA).